A 115-amino-acid polypeptide reads, in one-letter code: Large ribosomal subunit protein bL20c (115 aa).

The protein belongs to the bacterial ribosomal protein bL20 family.

The protein localises to the plastid. Its subcellular location is the chloroplast. Functionally, binds directly to 23S ribosomal RNA and is necessary for the in vitro assembly process of the 50S ribosomal subunit. It is not involved in the protein synthesizing functions of that subunit. The protein is Large ribosomal subunit protein bL20c of Physcomitrium patens (Spreading-leaved earth moss).